The chain runs to 879 residues: Oxysterol-binding protein-related protein 5 (879 aa).

The interval 1 to 73 (MKEEAFLRRR…TPSSATKVPP (73 aa)) is disordered. Serine 12 bears the Phosphoserine mark. The stretch at 93–123 (VTKKETLKAQKENYRQEKKRATRQLLSALTD) forms a coiled coil. Residues 126-243 (VVIMADSLKI…WLDALELALR (118 aa)) enclose the PH domain. Residues 254–341 (KPGRDGEPGT…TPGAPVRRGT (88 aa)) form a disordered region. Composition is skewed to basic and acidic residues over residues 300-309 (FSDKSERENP) and 316-325 (TQDHSRKTES). A 1,2-diacyl-sn-glycero-3-phospho-(1D-myo-inositol 4-phosphate) contacts are provided by residues 384-389 (LSRVVL), 446-449 (KPYN), and 478-479 (HH). A 1,2-diacyl-sn-glycero-3-phospho-L-serine contacts are provided by residues 384–389 (LSRVVL) and asparagine 449. Serine 504 contacts a 1,2-diacyl-sn-glycero-3-phospho-L-serine. Residues lysine 670, glutamate 674, and arginine 678 each contribute to the a 1,2-diacyl-sn-glycero-3-phospho-(1D-myo-inositol 4-phosphate) site. The tract at residues 742–806 (TTFLGSPGPR…FVPGGESPCP (65 aa)) is disordered. Position 747 is a phosphoserine (serine 747). Positions 750-765 (PRHERSGPDQRLRKAS) are enriched in basic and acidic residues. A compositionally biased stretch (polar residues) spans 766–783 (DQPSGHSQATESSGSTPE). The helical transmembrane segment at 860-878 (SWFLLCVFLACQLFINHIL) threads the bilayer.

Belongs to the OSBP family. Ubiquitously expressed.

It is found in the endoplasmic reticulum membrane. In terms of biological role, lipid transporter involved in lipid countertransport between the endoplasmic reticulum and the plasma membrane: specifically exchanges phosphatidylserine with phosphatidylinositol 4-phosphate (PI4P), delivering phosphatidylserine to the plasma membrane in exchange for PI4P, which is degraded by the SAC1/SACM1L phosphatase in the endoplasmic reticulum. Binds phosphatidylserine and PI4P in a mutually exclusive manner. May cooperate with NPC1 to mediate the exit of cholesterol from endosomes/lysosomes. Binds 25-hydroxycholesterol and cholesterol. This is Oxysterol-binding protein-related protein 5 (OSBPL5) from Homo sapiens (Human).